Here is a 417-residue protein sequence, read N- to C-terminus: Serine/threonine transporter SstT (417 aa).

8 helical membrane-spanning segments follow: residues 21–41 (ILAG…VAKM), 49–69 (FISA…MASI), 83–103 (ILVL…VASF), 142–162 (ALIN…GLAL), 193–213 (IGIF…ALAG), 218–238 (LLVL…LIVF), 291–311 (IPLG…ILTL), and 331–351 (LVAA…LLLI).

Belongs to the dicarboxylate/amino acid:cation symporter (DAACS) (TC 2.A.23) family.

Its subcellular location is the cell inner membrane. It carries out the reaction L-serine(in) + Na(+)(in) = L-serine(out) + Na(+)(out). The catalysed reaction is L-threonine(in) + Na(+)(in) = L-threonine(out) + Na(+)(out). Its function is as follows. Involved in the import of serine and threonine into the cell, with the concomitant import of sodium (symport system). In Proteus mirabilis (strain HI4320), this protein is Serine/threonine transporter SstT.